Here is a 196-residue protein sequence, read N- to C-terminus: uncharacterized protein (196 aa).

2 CBS domains span residues 10–69 (ARRD…NPDE) and 76–132 (MSQP…LVAT). Residues 153–187 (IIEGVCDLCETYSEELRFVDGVWVCPECYEDILGR) enclose the ACP-type MB domain. Fe cation-binding residues include Cys-158, Cys-161, Cys-177, and Cys-180. Positions 158, 161, 177, and 180 each coordinate Zn(2+).

This is an uncharacterized protein from Methanopyrus kandleri (strain AV19 / DSM 6324 / JCM 9639 / NBRC 100938).